The following is a 27-amino-acid chain: Small ribosomal subunit protein bTHX (27 aa).

The span at 1–13 (MGKGDRRTRRGKI) shows a compositional bias: basic residues. Residues 1 to 27 (MGKGDRRTRRGKIWRGTYGKYRPRKKK) are disordered.

The protein belongs to the bacterial ribosomal protein bTHX family. In terms of assembly, part of the 30S ribosomal subunit.

In terms of biological role, binds at the top of the head of the 30S subunit. It stabilizes a number of different RNA elements and thus is important for subunit structure. The polypeptide is Small ribosomal subunit protein bTHX (rpsU) (Thermus aquaticus).